A 513-amino-acid polypeptide reads, in one-letter code: Probable cytosol aminopeptidase (513 aa).

Mn(2+)-binding residues include K275 and D280. K287 is an active-site residue. Mn(2+) contacts are provided by D298, D357, and E359. R361 is an active-site residue.

The protein belongs to the peptidase M17 family. Requires Mn(2+) as cofactor.

The protein localises to the cytoplasm. The enzyme catalyses Release of an N-terminal amino acid, Xaa-|-Yaa-, in which Xaa is preferably Leu, but may be other amino acids including Pro although not Arg or Lys, and Yaa may be Pro. Amino acid amides and methyl esters are also readily hydrolyzed, but rates on arylamides are exceedingly low.. It carries out the reaction Release of an N-terminal amino acid, preferentially leucine, but not glutamic or aspartic acids.. In terms of biological role, presumably involved in the processing and regular turnover of intracellular proteins. Catalyzes the removal of unsubstituted N-terminal amino acids from various peptides. This Streptomyces avermitilis (strain ATCC 31267 / DSM 46492 / JCM 5070 / NBRC 14893 / NCIMB 12804 / NRRL 8165 / MA-4680) protein is Probable cytosol aminopeptidase.